The sequence spans 147 residues: Hemoglobin subunit beta-A/B (147 aa).

The Globin domain occupies 2 to 147; sequence EWTDAERSAI…VVNALKRQYH (146 aa). Positions 63 and 92 each coordinate heme b.

This sequence belongs to the globin family. Heterotetramer of two alpha chains and two beta chains. In terms of tissue distribution, red blood cells.

Involved in oxygen transport from gills to the various peripheral tissues. The sequence is that of Hemoglobin subunit beta-A/B from Cyprinus carpio (Common carp).